The chain runs to 695 residues: Threonine--tRNA ligase (695 aa).

In terms of domain architecture, TGS spans 6-75 (SAIFVNTTDT…ETTATFTAVP (70 aa)). The catalytic stretch occupies residues 274-580 (DHRRLGTELD…LLEHYAGAFP (307 aa)). Cysteine 379, histidine 430, and histidine 557 together coordinate Zn(2+).

This sequence belongs to the class-II aminoacyl-tRNA synthetase family. Homodimer. Zn(2+) serves as cofactor.

The protein resides in the cytoplasm. The enzyme catalyses tRNA(Thr) + L-threonine + ATP = L-threonyl-tRNA(Thr) + AMP + diphosphate + H(+). Its function is as follows. Catalyzes the attachment of threonine to tRNA(Thr) in a two-step reaction: L-threonine is first activated by ATP to form Thr-AMP and then transferred to the acceptor end of tRNA(Thr). Also edits incorrectly charged L-seryl-tRNA(Thr). This is Threonine--tRNA ligase from Corynebacterium glutamicum (strain ATCC 13032 / DSM 20300 / JCM 1318 / BCRC 11384 / CCUG 27702 / LMG 3730 / NBRC 12168 / NCIMB 10025 / NRRL B-2784 / 534).